A 970-amino-acid chain; its full sequence is Sodium/calcium exchanger 1 (970 aa).

The N-terminal stretch at 1-32 (MLRLRLSPTFSVGFHLLAFVPLLFSHVDLISA) is a signal peptide. The Extracellular portion of the chain corresponds to 33–71 (DTEMEGEGNETGECTGSYYCKKGVILPIWEPQDPSFGDK). The N-linked (GlcNAc...) asparagine glycan is linked to asparagine 41. A helical transmembrane segment spans residues 72–92 (IARATVYFVAMVYMFLGVSII). The Cytoplasmic segment spans residues 93-133 (ADRFMSSIEVITSQEKEITIKKPNGETTKTTVRIWNETVSN). The chain crosses the membrane as a helical span at residues 134 to 154 (LTLMALGSSAPEILLSVIEVC). The Alpha-1 repeat unit spans residues 138–178 (ALGSSAPEILLSVIEVCGHNFTAGDLGPSTIVGSAAFNMFI). Topologically, residues 155-167 (GHNFTAGDLGPST) are extracellular. Asparagine 157 is a glycosylation site (N-linked (GlcNAc...) asparagine). A helical membrane pass occupies residues 168-188 (IVGSAAFNMFIIIALCVYVVP). The Cytoplasmic portion of the chain corresponds to 189–201 (DGETRKIKHLRVF). Residues 202-222 (FVTAAWSIFAYTWLYIILSVI) traverse the membrane as a helical segment. The Extracellular portion of the chain corresponds to 223–228 (SPGVVE). A helical transmembrane segment spans residues 229–249 (VWEGLLTFFFFPICVVFAWVA). Residues 250 to 797 (DRRLLFYKYV…FVPPTEYWNG (548 aa)) are Cytoplasmic-facing. Residues 251–270 (RRLLFYKYVYKRYRAGKQRG) form a putative calmodulin-binding region region. Residues serine 282 and serine 389 each carry the phosphoserine modification. 2 consecutive Calx-beta domains span residues 393-493 (VNTE…VHLS) and 524-624 (ATVT…LEIG). Ca(2+)-binding residues include glutamate 417, aspartate 453, aspartate 478, aspartate 479, isoleucine 481, glutamate 483, glutamate 486, aspartate 530, aspartate 531, aspartate 532, glutamate 548, aspartate 584, aspartate 610, glutamate 611, glutamate 612, and glutamate 715. The helical transmembrane segment at 798–818 (WACFIVSILMIGILTAFIGDL) threads the bilayer. Topologically, residues 819-821 (ASH) are extracellular. Residues 822-842 (FGCTIGLKDSVTAVVFVALGT) traverse the membrane as a helical segment. The stretch at 839-875 (ALGTSVPDTFASKVAATQDQYADASIGNVTGSNAVNV) is one Alpha-2 repeat. Residues 843–871 (SVPDTFASKVAATQDQYADASIGNVTGSN) are Cytoplasmic-facing. Residues 872 to 892 (AVNVFLGIGVAWSIAAIYHAA) traverse the membrane as a helical segment. The Extracellular segment spans residues 893-903 (NGEQFKVSPGT). Residues 904 to 924 (LAFSVTLFTIFAFINVGVLLY) traverse the membrane as a helical segment. Residues 925–941 (RRRPEIGGELGGPRTAK) are Cytoplasmic-facing. A helical transmembrane segment spans residues 942–962 (LLTSCLFVLLWLLYIFFSSLE). Residues 963–970 (AYCHIKGF) are Extracellular-facing.

The protein belongs to the Ca(2+):cation antiporter (CaCA) (TC 2.A.19) family. SLC8 subfamily. In terms of tissue distribution, detected in heart (at protein level). Detected in heart.

Its subcellular location is the cell membrane. The enzyme catalyses Ca(2+)(in) + 3 Na(+)(out) = Ca(2+)(out) + 3 Na(+)(in). Activated by micromolar levels of Ca(2+). Mediates the exchange of one Ca(2+) ion against three to four Na(+) ions across the cell membrane, and thereby contributes to the regulation of cytoplasmic Ca(2+) levels and Ca(2+)-dependent cellular processes. Contributes to Ca(2+) transport during excitation-contraction coupling in muscle. In a first phase, voltage-gated channels mediate the rapid increase of cytoplasmic Ca(2+) levels due to release of Ca(2+) stores from the endoplasmic reticulum. SLC8A1 mediates the export of Ca(2+) from the cell during the next phase, so that cytoplasmic Ca(2+) levels rapidly return to baseline. Required for normal embryonic heart development and the onset of heart contractions. This chain is Sodium/calcium exchanger 1 (SLC8A1), found in Felis catus (Cat).